An 819-amino-acid chain; its full sequence is MGNLEKLTPMMKQYMGIKEKYKDAILLFRLGDFYEAFFEDAEIISKVLNIVLTKRQNAPMAGIPYHALDNYLKKLVESGYKVAICEQMEDASQAKGIVKREVTRVITPGTIIEDELLSNDNNYLMAVIFDEKYVSAFIDVSTGELFLKSFDTFLEFVDFVKISSISQVICSKELFDKLKEEIPHLFVEELDEWYFQGYEEKIKETYGLFSIEHLEITELEKKVLGALFKYLEYTLMENKPPQKPKRLEGSKYMILDSKTVENLSLIPGEKGKNLFDILNKTKTSMGARLLKKWILQPLKEKKEILERQKLVEAFYNDHLLLNEVREYLSGVYDLERILTRLGYGKVSPKDLVSLKRSLYLVPSIKDALRTNENLVSFAQSLNEFNEVVGILEKALYDEPSNAPGDGNVIKGGYSVELDDYRNLLFHSEEKLKEFQESEREKTGIQKLRVGFNQVFGYYIEVPKGQVKNVPDYYIRKQTLVNSERYITQELKEFEEKIMSAREKVELIEKSLFEELKQKLSEYIDGLRNLAQKLSELDAISNLAMVARLYGYTKPKFTGGEFYVKNARHAVVERYVSDFVANDIYMDDRRRMYIVTGPNMSGKSTYIRQVGLIAVMAQIGSFVPADDAEIPIFDRVFTRMGARDDISTGKSTFLIEMSEVALILEKATKKSLVLLDEVGRGTSTFDGISIAWAMSEYIYNEIGCETMFATHFTELTELSDVYEGIKNLTIEVRETNNGVVFLHKVVEGIADRSYGIEVAQIAGVPDGVVERAKEILDIISQKSELEKKVRVLKEGQLKKIKSKKKIPEGQLSLFEVGDIE.

596 to 603 (GPNMSGKS) provides a ligand contact to ATP.

The protein belongs to the DNA mismatch repair MutS family.

This protein is involved in the repair of mismatches in DNA. It is possible that it carries out the mismatch recognition step. This protein has a weak ATPase activity. This Thermosipho melanesiensis (strain DSM 12029 / CIP 104789 / BI429) protein is DNA mismatch repair protein MutS.